The chain runs to 301 residues: Peptidyl-prolyl cis-trans isomerase E (301 aa).

An RRM domain is found at 5–83; it reads KRVLYVGGLA…GRTIRVNLAK (79 aa). Residues Ser91, Ser97, and Ser119 each carry the phosphoserine modification. The disordered stretch occupies residues 107-140; the sequence is GKTLEENKEEEGSEPPKAETQEGEPAAKKARSNP. The region spanning 143-299 is the PPIase cyclophilin-type domain; sequence YMDIKIGNKP…QKVIIADCGE (157 aa).

The protein belongs to the cyclophilin-type PPIase family. PPIase E subfamily. As to quaternary structure, identified in the spliceosome C complex. Component of the XAB2 complex, a multimeric protein complex composed of XAB2, PRPF19, AQR, ZNF830, ISY1, and PPIE. Identified in a pentameric intron-binding (IB) complex composed of AQR, XAB2, ISY1, ZNF830 and PPIE that is incorporated into the spliceosome as a preassembled complex. The IB complex does not contain PRPF19. Interacts (via RNA-binding domain) with KMT2A (via the third PHD-type zinc-finger).

The protein localises to the nucleus. The catalysed reaction is [protein]-peptidylproline (omega=180) = [protein]-peptidylproline (omega=0). Involved in pre-mRNA splicing as component of the spliceosome. Combines RNA-binding and PPIase activities. Binds mRNA and has a preference for single-stranded RNA molecules with poly-A and poly-U stretches, suggesting it binds to the poly(A)-region in the 3'-UTR of mRNA molecules. Catalyzes the cis-trans isomerization of proline imidic peptide bonds in proteins. Inhibits KMT2A activity; this requires proline isomerase activity. This Pongo abelii (Sumatran orangutan) protein is Peptidyl-prolyl cis-trans isomerase E (PPIE).